Reading from the N-terminus, the 572-residue chain is Mitochondrial distribution and morphology protein 34 (572 aa).

One can recognise an SMP-LTD domain in the interval 1–195 (MAFNFNWSPL…LPAIIHRLSL (195 aa)). Disordered regions lie at residues 208-236 (LQTQ…VDAL), 296-405 (PSDQ…CSAP), 455-518 (RDTA…PFIN), and 551-572 (NACG…AYGH). The span at 296–347 (PSDQTDASGGVTSPFSPVLSRTQSQVGSMSSFPDSASMVSNQSRSSTPSHTF) shows a compositional bias: polar residues. The span at 358–370 (RHSKAHARKRKKR) shows a compositional bias: basic residues. Residues 371-381 (VVDLRRPKTTD) are compositionally biased toward basic and acidic residues. Composition is skewed to polar residues over residues 387–401 (SDES…TPSI) and 498–511 (ATGS…QLPS).

Belongs to the MDM34 family. In terms of assembly, component of the ER-mitochondria encounter structure (ERMES) or MDM complex, composed of mmm1, mdm10, mdm12 and mdm34.

The protein localises to the mitochondrion outer membrane. Its function is as follows. Component of the ERMES/MDM complex, which serves as a molecular tether to connect the endoplasmic reticulum (ER) and mitochondria. Components of this complex are involved in the control of mitochondrial shape and protein biogenesis, and function in nonvesicular lipid trafficking between the ER and mitochondria. Mdm34 is required for the interaction of the ER-resident membrane protein mmm1 and the outer mitochondrial membrane-resident beta-barrel protein mdm10. This Neosartorya fischeri (strain ATCC 1020 / DSM 3700 / CBS 544.65 / FGSC A1164 / JCM 1740 / NRRL 181 / WB 181) (Aspergillus fischerianus) protein is Mitochondrial distribution and morphology protein 34.